The chain runs to 339 residues: DNA-directed RNA polymerase subunit alpha (339 aa).

The interval 1 to 234 is alpha N-terminal domain (alpha-NTD); it reads MIEKNWQELI…DQFQIFINFE (234 aa). The tract at residues 251 to 339 is alpha C-terminal domain (alpha-CTD); sequence FNPALLRKVD…DLAKRFEDHV (89 aa).

The protein belongs to the RNA polymerase alpha chain family. Homodimer. The RNAP catalytic core consists of 2 alpha, 1 beta, 1 beta' and 1 omega subunit. When a sigma factor is associated with the core the holoenzyme is formed, which can initiate transcription.

It catalyses the reaction RNA(n) + a ribonucleoside 5'-triphosphate = RNA(n+1) + diphosphate. Its function is as follows. DNA-dependent RNA polymerase catalyzes the transcription of DNA into RNA using the four ribonucleoside triphosphates as substrates. In Maricaulis maris (strain MCS10) (Caulobacter maris), this protein is DNA-directed RNA polymerase subunit alpha.